The sequence spans 306 residues: Ribosomal protein L11 methyltransferase (306 aa).

Residues T139, G173, D195, and N242 each coordinate S-adenosyl-L-methionine.

It belongs to the methyltransferase superfamily. PrmA family.

Its subcellular location is the cytoplasm. It carries out the reaction L-lysyl-[protein] + 3 S-adenosyl-L-methionine = N(6),N(6),N(6)-trimethyl-L-lysyl-[protein] + 3 S-adenosyl-L-homocysteine + 3 H(+). Functionally, methylates ribosomal protein L11. The protein is Ribosomal protein L11 methyltransferase of Trichormus variabilis (strain ATCC 29413 / PCC 7937) (Anabaena variabilis).